Here is a 587-residue protein sequence, read N- to C-terminus: ASI1-immunoprecipitated protein 3 (587 aa).

Residues 1–118 (MVLSRRFAQV…NVTGKGKGKR (118 aa)) are disordered. Residues 66–98 (EDEDMAEGDDDQAEEETNPEAEEEEDEEEEEKP) are compositionally biased toward acidic residues. In terms of domain architecture, BAH spans 129-248 (NTYDLEVPVL…TVEKKLWKLT (120 aa)). One can recognise a TFIIS central domain in the interval 344–493 (HRDKCLGKLL…RMQMTSVRCS (150 aa)). 2 disordered regions span residues 371-396 (EAKVGSDASHLEQDEKDTKPENGKDE) and 539-587 (TDKP…KKPE). A compositionally biased stretch (basic and acidic residues) spans 560–570 (ETNKPKDEALK). The segment covering 571–581 (TNDSNADNNPE) has biased composition (polar residues).

In terms of assembly, interacts with MOM1. Component of the ASI1-AIPP1-EDM2 (AAE) RNA regulatory complex composed of at least AIPP1/EDM3, ASI1 and EDM2 and may contain CPL2, AIPP2 and AIPP3/BDT1. Part of the BAH-PHD bivalent histone reader complex that contains AIPP2, PAIPP2 and AIPP3/BDT1; the BAH-PHD module associates with CPL2 to form the BAH-PHD-CPL2 complex (BPC) for transcriptional repression. Binds directly to CPL2, PHD1, PAIPP2/PHD2, AIPP2/PHD3, PHD4, PHD5 and PHD6. Expressed ubiquitously.

It is found in the nucleus. Functionally, transcriptional repressor. Together with PHD finger-containing proteins (e.g. PHD1, PAIPP2/PHD2, AIPP2/PHD3, PHD4, PHD5 and PHD6), cooperates to form a BAH-PHD bivalent histone reader complex able to read histone H3 lysine 27 trimethylation (H3K27me3) and low-methylated H3K4 histone marks in order to regulate transcription, especially to prevent early flowering; H3K27me3 reader of this complex. CPL2 is subsequently recruited to form a BAH-PHD-CPL2 complex (BPC) in order to silence several H3K27me3 and low-methylated H3K4 enriched loci, including AGO5, via the phosphorylation state-dependent inhibition of Pol II release from the transcriptional start site (e.g. Ser5P-Pol II dephosphorylation). The BPC complex represses flowering by inhibiting the expression of several genes, including AGL6, FT, FUL and SOC1. Prevents the accumulation of intronic heterochromatin-containing genes (e.g. IBM1, At3g05410 and RPP7). Seems to not be involved in vernalization establishment, by contrast to orthologs in grass plants. The sequence is that of ASI1-immunoprecipitated protein 3 from Arabidopsis thaliana (Mouse-ear cress).